A 175-amino-acid chain; its full sequence is Transcription factor HES-3 (175 aa).

Positions 1-49 (MEKKRRARINVSLEQLRSLLERHYSHQIRKRKLEKADILELSVKYMRSL) constitute a bHLH domain. An Orange domain is found at 65 to 98 (YPSGFQGGLRGVSQRLRPGEGDSGLRCPLLLQRR). A disordered region spans residues 126–166 (RAAGGSHSPQSPLPLPGGLLESSTDVVAPHPASNCQAESTR). A compositionally biased stretch (low complexity) spans 129–148 (GGSHSPQSPLPLPGGLLESS). A WRPW motif motif is present at residues 172-175 (WRPW).

Transcription repression requires formation of a complex with a corepressor protein of the Groucho/TLE family.

It localises to the nucleus. Transcriptional repressor of genes that require a bHLH protein for their transcription. This is Transcription factor HES-3 (Hes3) from Mus musculus (Mouse).